The following is a 255-amino-acid chain: 3-deoxy-manno-octulosonate cytidylyltransferase (255 aa).

Belongs to the KdsB family.

It is found in the cytoplasm. It catalyses the reaction 3-deoxy-alpha-D-manno-oct-2-ulosonate + CTP = CMP-3-deoxy-beta-D-manno-octulosonate + diphosphate. Its pathway is nucleotide-sugar biosynthesis; CMP-3-deoxy-D-manno-octulosonate biosynthesis; CMP-3-deoxy-D-manno-octulosonate from 3-deoxy-D-manno-octulosonate and CTP: step 1/1. It participates in bacterial outer membrane biogenesis; lipopolysaccharide biosynthesis. Activates KDO (a required 8-carbon sugar) for incorporation into bacterial lipopolysaccharide in Gram-negative bacteria. This Thermodesulfovibrio yellowstonii (strain ATCC 51303 / DSM 11347 / YP87) protein is 3-deoxy-manno-octulosonate cytidylyltransferase.